A 63-amino-acid polypeptide reads, in one-letter code: Large ribosomal subunit protein bL35 (63 aa).

The protein belongs to the bacterial ribosomal protein bL35 family.

The polypeptide is Large ribosomal subunit protein bL35 (Campylobacter fetus subsp. fetus (strain 82-40)).